Consider the following 518-residue polypeptide: Protein nucleotidyltransferase YdiU (518 aa).

Residues Gly100, Gly102, Arg103, Lys123, Asp135, Gly136, Arg193, and Arg200 each coordinate ATP. Asp270 acts as the Proton acceptor in catalysis. Mg(2+)-binding residues include Asn271 and Asp280. Residue Asp280 coordinates ATP.

It belongs to the SELO family. It depends on Mg(2+) as a cofactor. Mn(2+) is required as a cofactor.

The catalysed reaction is L-seryl-[protein] + ATP = 3-O-(5'-adenylyl)-L-seryl-[protein] + diphosphate. It carries out the reaction L-threonyl-[protein] + ATP = 3-O-(5'-adenylyl)-L-threonyl-[protein] + diphosphate. It catalyses the reaction L-tyrosyl-[protein] + ATP = O-(5'-adenylyl)-L-tyrosyl-[protein] + diphosphate. The enzyme catalyses L-histidyl-[protein] + UTP = N(tele)-(5'-uridylyl)-L-histidyl-[protein] + diphosphate. The catalysed reaction is L-seryl-[protein] + UTP = O-(5'-uridylyl)-L-seryl-[protein] + diphosphate. It carries out the reaction L-tyrosyl-[protein] + UTP = O-(5'-uridylyl)-L-tyrosyl-[protein] + diphosphate. Nucleotidyltransferase involved in the post-translational modification of proteins. It can catalyze the addition of adenosine monophosphate (AMP) or uridine monophosphate (UMP) to a protein, resulting in modifications known as AMPylation and UMPylation. The sequence is that of Protein nucleotidyltransferase YdiU from Xanthomonas oryzae pv. oryzae (strain PXO99A).